The sequence spans 507 residues: Probable Xaa-Pro aminopeptidase HCAG_02413 (507 aa).

Mn(2+) contacts are provided by D283, D294, E431, and E469.

This sequence belongs to the peptidase M24B family. Mn(2+) serves as cofactor.

It catalyses the reaction Release of any N-terminal amino acid, including proline, that is linked to proline, even from a dipeptide or tripeptide.. Its function is as follows. Catalyzes the removal of a penultimate prolyl residue from the N-termini of peptides. This is Probable Xaa-Pro aminopeptidase HCAG_02413 from Ajellomyces capsulatus (strain NAm1 / WU24) (Darling's disease fungus).